Consider the following 252-residue polypeptide: Trans-aconitate 2-methyltransferase (252 aa).

This sequence belongs to the methyltransferase superfamily. Tam family.

It localises to the cytoplasm. The enzyme catalyses trans-aconitate + S-adenosyl-L-methionine = (E)-3-(methoxycarbonyl)pent-2-enedioate + S-adenosyl-L-homocysteine. Catalyzes the S-adenosylmethionine monomethyl esterification of trans-aconitate. This Escherichia coli O9:H4 (strain HS) protein is Trans-aconitate 2-methyltransferase.